Here is a 619-residue protein sequence, read N- to C-terminus: Translation initiation factor eIF2B subunit delta (619 aa).

Basic and acidic residues predominate over residues 21–32; sequence GDYLDSKQEGKP. Residues 21–251 are disordered; the sequence is GDYLDSKQEG…PKQRGKITKK (231 aa). The segment covering 42-56 has biased composition (low complexity); it reads TNTSPVSIPTIISPP. A compositionally biased stretch (polar residues) spans 57–84; that stretch reads LGSNNSNYGKSPKSSYDNKQTSPLLSAS. Positions 85–98 are enriched in low complexity; sequence NNRKNNNNNNNNNN. Residues 99-125 are compositionally biased toward polar residues; the sequence is ATSPKDSSIIGKNNVNSDLSKVSSSLN. Positions 136 to 199 are enriched in low complexity; sequence STSSTPTSTP…KQQSKQQATQ (64 aa). Residues 200 to 244 show a composition bias toward basic and acidic residues; sequence QDKKDKEQQQQQQDKQDKESNEIKGSKEVAKDGQHGVKQFDDPKQ.

The protein belongs to the eIF-2B alpha/beta/delta subunits family. As to quaternary structure, component of the translation initiation factor 2B (eIF2B) complex which is a heterodecamer of two sets of five different subunits: alpha, beta, gamma, delta and epsilon. Subunits alpha, beta and delta comprise a regulatory subcomplex and subunits epsilon and gamma comprise a catalytic subcomplex. Within the complex, the hexameric regulatory complex resides at the center, with the two heterodimeric catalytic subcomplexes bound on opposite sides.

Its subcellular location is the cytoplasm. It localises to the cytosol. In terms of biological role, acts as a component of the translation initiation factor 2B (eIF2B) complex, which catalyzes the exchange of GDP for GTP on eukaryotic initiation factor 2 (eIF2) gamma subunit. Its guanine nucleotide exchange factor activity is repressed when bound to eIF2 complex phosphorylated on the alpha subunit, thereby limiting the amount of methionyl-initiator methionine tRNA available to the ribosome and consequently global translation is repressed. In Dictyostelium discoideum (Social amoeba), this protein is Translation initiation factor eIF2B subunit delta (eif2b4).